Reading from the N-terminus, the 100-residue chain is Small ribosomal subunit protein bS20 (100 aa).

The span at 1 to 20 (MASGKPKKKNPRLASGRKRV) shows a compositional bias: basic residues. Residues 1–21 (MASGKPKKKNPRLASGRKRVR) form a disordered region.

Belongs to the bacterial ribosomal protein bS20 family.

Its function is as follows. Binds directly to 16S ribosomal RNA. This is Small ribosomal subunit protein bS20 from Albidiferax ferrireducens (strain ATCC BAA-621 / DSM 15236 / T118) (Rhodoferax ferrireducens).